The sequence spans 474 residues: UDP-N-acetylmuramate--L-alanine ligase (474 aa).

112–118 (GTHGKTT) contacts ATP.

The protein belongs to the MurCDEF family.

Its subcellular location is the cytoplasm. It catalyses the reaction UDP-N-acetyl-alpha-D-muramate + L-alanine + ATP = UDP-N-acetyl-alpha-D-muramoyl-L-alanine + ADP + phosphate + H(+). The protein operates within cell wall biogenesis; peptidoglycan biosynthesis. In terms of biological role, cell wall formation. The sequence is that of UDP-N-acetylmuramate--L-alanine ligase from Cupriavidus taiwanensis (strain DSM 17343 / BCRC 17206 / CCUG 44338 / CIP 107171 / LMG 19424 / R1) (Ralstonia taiwanensis (strain LMG 19424)).